Here is a 146-residue protein sequence, read N- to C-terminus: Hemoglobin subunit beta (146 aa).

At V1 the chain carries N-acetylvaline. In terms of domain architecture, Globin spans 2-146 (HLTAEEKDAV…VANALAHRYH (145 aa)). S44 carries the phosphoserine modification. K59 carries the N6-acetyllysine modification. H63 serves as a coordination point for heme b. An N6-acetyllysine modification is found at K82. Residue H92 participates in heme b binding. An S-nitrosocysteine modification is found at C93.

Belongs to the globin family. Heterotetramer of two alpha chains and two beta chains. In terms of tissue distribution, red blood cells.

In terms of biological role, involved in oxygen transport from the lung to the various peripheral tissues. The protein is Hemoglobin subunit beta (HBB) of Hippopotamus amphibius (Hippopotamus).